The chain runs to 599 residues: Sulfite reductase [NADPH] flavoprotein alpha-component (599 aa).

Positions 64-202 (ITIISASQTG…AASEWRARVV (139 aa)) constitute a Flavodoxin-like domain. FMN contacts are provided by residues 70 to 75 (SQTGNA), 117 to 120 (STQG), and 153 to 162 (LGDSSYEFFC). The 215-residue stretch at 234–448 (DSPLVASLSV…IEHNDNFRLP (215 aa)) folds into the FAD-binding FR-type domain. FAD contacts are provided by residues T322, A356, 386 to 389 (RLYS), 404 to 406 (TVG), Y410, and 419 to 422 (GGAS). NADP(+) contacts are provided by residues 519-520 (SR), 525-529 (KVYVQ), and D561. Y599 contributes to the FAD binding site.

It belongs to the NADPH-dependent sulphite reductase flavoprotein subunit CysJ family. The protein in the N-terminal section; belongs to the flavodoxin family. This sequence in the C-terminal section; belongs to the flavoprotein pyridine nucleotide cytochrome reductase family. Alpha(8)-beta(8). The alpha component is a flavoprotein, the beta component is a hemoprotein. It depends on FAD as a cofactor. Requires FMN as cofactor.

The enzyme catalyses hydrogen sulfide + 3 NADP(+) + 3 H2O = sulfite + 3 NADPH + 4 H(+). It functions in the pathway sulfur metabolism; hydrogen sulfide biosynthesis; hydrogen sulfide from sulfite (NADPH route): step 1/1. Its function is as follows. Component of the sulfite reductase complex that catalyzes the 6-electron reduction of sulfite to sulfide. This is one of several activities required for the biosynthesis of L-cysteine from sulfate. The flavoprotein component catalyzes the electron flow from NADPH -&gt; FAD -&gt; FMN to the hemoprotein component. The polypeptide is Sulfite reductase [NADPH] flavoprotein alpha-component (Escherichia coli O9:H4 (strain HS)).